Reading from the N-terminus, the 182-residue chain is Fimbrial subunit type 1 (182 aa).

Positions 1-23 are cleaved as a signal peptide; it reads MKIKTLAIVVLSALSLSSAAALA. Residues Cys44 and Cys84 are joined by a disulfide bond.

Belongs to the fimbrial protein family.

It is found in the fimbrium. The protein is Fimbrial subunit type 1 of Klebsiella pneumoniae.